A 102-amino-acid chain; its full sequence is Small ribosomal subunit protein uS10 (102 aa).

The protein belongs to the universal ribosomal protein uS10 family. In terms of assembly, part of the 30S ribosomal subunit.

Involved in the binding of tRNA to the ribosomes. The chain is Small ribosomal subunit protein uS10 from Chlorobium phaeobacteroides (strain BS1).